Consider the following 729-residue polypeptide: MAKSVVIAEKPSVARDIARVLKCDKKGNGYLEGSKYIVTWALGHLVTLADPESYDVKYKKWNLEDLPMLPERLKLTVIKQTGKQFNAVKSQLLRKDVNEIIVATDAGREGELVARWIIDKVRINKPIKRLWISSVTDKAIKDGFANLKPGKAYDNLYASAVARSEADWYIGLNATRALTTRFNAQLNCGRVQTPTVAMIANREDEIKNFKAQTYYGIEAQTTNQLKLTWQDANGNSRSFNKEKIDGIVKGLDKHNATVLEIDKKQKKSFSPGLYDLTELQRDANKKFGYSAKETLNIMQKLYEQHKVLTYPRTDSRYISSDIVGTLPERLKACGVGEYRPLAHKVLQKPIKANKSFVDDSKVSDHHAIIPTEGYVNFSAFTDKERKIYDLVVKRFLAVLFPAFEYEQLTLRTKVGNETFIARGKTILHAGWKEVYENRFEDDDVTDDVKEQLLPRIEKGDTLTVKLIMQTSGQTKAPARFNEATLLSAMENPTKYMDTQNKQLADTLKSTGGLGTVATRADIIDKLFNSFLIEKRGKDIHITSKGRQLLDLVPEELKSPTLTGEWEQKLEAIAKGKLKKEVFISEMKNYTKEIVSEIKSSDKKYKHDNISTKSCPDCGKPMLEVNGKKGKMLVCQDRECGHRKNVSRTTNARCPQCKKKLELRGEGAGQIFACKCGYREKLSTFQERRKKESGNKADKRDVQKYMKQQKKEEEPLNNPFAEALKKLKFD.

The Toprim domain maps to 3 to 136; that stretch reads KSVVIAEKPS…IKRLWISSVT (134 aa). The Mg(2+) site is built by Glu9 and Asp105. The Topo IA-type catalytic domain occupies 153–594; it reads YDNLYASAVA…EMKNYTKEIV (442 aa). An interaction with DNA region spans residues 187–192; sequence NCGRVQ. Residue Tyr310 is the O-(5'-phospho-DNA)-tyrosine intermediate of the active site. Basic and acidic residues predominate over residues 686–713; it reads ERRKKESGNKADKRDVQKYMKQQKKEEE. The tract at residues 686 to 718 is disordered; sequence ERRKKESGNKADKRDVQKYMKQQKKEEEPLNNP.

It belongs to the type IA topoisomerase family. It depends on Mg(2+) as a cofactor.

It catalyses the reaction ATP-independent breakage of single-stranded DNA, followed by passage and rejoining.. Functionally, releases the supercoiling and torsional tension of DNA, which is introduced during the DNA replication and transcription, by transiently cleaving and rejoining one strand of the DNA duplex. Introduces a single-strand break via transesterification at a target site in duplex DNA. The scissile phosphodiester is attacked by the catalytic tyrosine of the enzyme, resulting in the formation of a DNA-(5'-phosphotyrosyl)-enzyme intermediate and the expulsion of a 3'-OH DNA strand. The free DNA strand then undergoes passage around the unbroken strand, thus removing DNA supercoils. Finally, in the religation step, the DNA 3'-OH attacks the covalent intermediate to expel the active-site tyrosine and restore the DNA phosphodiester backbone. This chain is DNA topoisomerase 3, found in Bacillus thuringiensis subsp. konkukian (strain 97-27).